The chain runs to 525 residues: GMP synthase [glutamine-hydrolyzing] (525 aa).

A Glutamine amidotransferase type-1 domain is found at 8–207 (KILILDFGSQ…ALDICGCAAN (200 aa)). The active-site Nucleophile is C85. Residues H181 and E183 contribute to the active site. A GMPS ATP-PPase domain is found at 208–400 (WKPSSIIEDA…LGLPYNMLYR (193 aa)). 235–241 (SGGVDSS) serves as a coordination point for ATP.

In terms of assembly, homodimer.

It carries out the reaction XMP + L-glutamine + ATP + H2O = GMP + L-glutamate + AMP + diphosphate + 2 H(+). It participates in purine metabolism; GMP biosynthesis; GMP from XMP (L-Gln route): step 1/1. Its function is as follows. Catalyzes the synthesis of GMP from XMP. This is GMP synthase [glutamine-hydrolyzing] from Shewanella putrefaciens (strain CN-32 / ATCC BAA-453).